Reading from the N-terminus, the 267-residue chain is Tryptophan synthase alpha chain (267 aa).

Residues Glu-43 and Asp-54 each act as proton acceptor in the active site.

It belongs to the TrpA family. Tetramer of two alpha and two beta chains.

The catalysed reaction is (1S,2R)-1-C-(indol-3-yl)glycerol 3-phosphate + L-serine = D-glyceraldehyde 3-phosphate + L-tryptophan + H2O. It participates in amino-acid biosynthesis; L-tryptophan biosynthesis; L-tryptophan from chorismate: step 5/5. Functionally, the alpha subunit is responsible for the aldol cleavage of indoleglycerol phosphate to indole and glyceraldehyde 3-phosphate. The protein is Tryptophan synthase alpha chain of Bacillus subtilis subsp. natto.